Reading from the N-terminus, the 202-residue chain is 3-isopropylmalate dehydratase small subunit (202 aa).

The protein belongs to the LeuD family. LeuD type 1 subfamily. As to quaternary structure, heterodimer of LeuC and LeuD.

The catalysed reaction is (2R,3S)-3-isopropylmalate = (2S)-2-isopropylmalate. Its pathway is amino-acid biosynthesis; L-leucine biosynthesis; L-leucine from 3-methyl-2-oxobutanoate: step 2/4. Catalyzes the isomerization between 2-isopropylmalate and 3-isopropylmalate, via the formation of 2-isopropylmaleate. This chain is 3-isopropylmalate dehydratase small subunit, found in Buchnera aphidicola subsp. Pemphigus spyrothecae.